The chain runs to 409 residues: NADH-ubiquinone oxidoreductase chain 4 (409 aa).

The next 13 helical transmembrane spans lie at L9–A29, S44–S64, F68–S88, V90–G110, I125–F145, V160–L180, L194–L214, V221–S241, L246–S268, G273–Y295, Y305–L325, F352–L372, and V389–F409.

Belongs to the complex I subunit 4 family.

The protein localises to the mitochondrion membrane. The enzyme catalyses a ubiquinone + NADH + 5 H(+)(in) = a ubiquinol + NAD(+) + 4 H(+)(out). Core subunit of the mitochondrial membrane respiratory chain NADH dehydrogenase (Complex I) that is believed to belong to the minimal assembly required for catalysis. Complex I functions in the transfer of electrons from NADH to the respiratory chain. The immediate electron acceptor for the enzyme is believed to be ubiquinone. This Ascaris suum (Pig roundworm) protein is NADH-ubiquinone oxidoreductase chain 4 (ND4).